A 183-amino-acid polypeptide reads, in one-letter code: ATP synthase subunit b, chloroplastic (183 aa).

A helical transmembrane segment spans residues 20 to 42 (INTNVFETNIINLAIVVGTLFYY).

This sequence belongs to the ATPase B chain family. As to quaternary structure, F-type ATPases have 2 components, F(1) - the catalytic core - and F(0) - the membrane proton channel. F(1) has five subunits: alpha(3), beta(3), gamma(1), delta(1), epsilon(1). F(0) has four main subunits: a(1), b(1), b'(1) and c(10-14). The alpha and beta chains form an alternating ring which encloses part of the gamma chain. F(1) is attached to F(0) by a central stalk formed by the gamma and epsilon chains, while a peripheral stalk is formed by the delta, b and b' chains.

The protein resides in the plastid. Its subcellular location is the chloroplast thylakoid membrane. Functionally, f(1)F(0) ATP synthase produces ATP from ADP in the presence of a proton or sodium gradient. F-type ATPases consist of two structural domains, F(1) containing the extramembraneous catalytic core and F(0) containing the membrane proton channel, linked together by a central stalk and a peripheral stalk. During catalysis, ATP synthesis in the catalytic domain of F(1) is coupled via a rotary mechanism of the central stalk subunits to proton translocation. In terms of biological role, component of the F(0) channel, it forms part of the peripheral stalk, linking F(1) to F(0). This Euglena gracilis protein is ATP synthase subunit b, chloroplastic.